A 140-amino-acid chain; its full sequence is Arsenate reductase ArsI2 (140 aa).

The Nucleophile; cysteine thioarsenate intermediate role is filled by Cys10.

The protein belongs to the ArsC family.

The catalysed reaction is [glutaredoxin]-dithiol + arsenate + glutathione + H(+) = glutathionyl-S-S-[glutaredoxin] + arsenite + H2O. Functionally, catalyzes the reduction of arsenate [As(V)] to arsenite [As(III)]. Does not constitute the major arsenate reductase in cells: essential only in the absence of ArsC (AC P74313). The sequence is that of Arsenate reductase ArsI2 from Synechocystis sp. (strain ATCC 27184 / PCC 6803 / Kazusa).